Reading from the N-terminus, the 150-residue chain is Triosephosphate isomerase (150 aa).

Positions 9 and 11 each coordinate substrate. His-95 serves as the catalytic Electrophile.

It belongs to the triosephosphate isomerase family. In terms of assembly, homodimer.

It is found in the cytoplasm. The enzyme catalyses D-glyceraldehyde 3-phosphate = dihydroxyacetone phosphate. It functions in the pathway carbohydrate biosynthesis; gluconeogenesis. Its pathway is carbohydrate degradation; glycolysis; D-glyceraldehyde 3-phosphate from glycerone phosphate: step 1/1. This Mycoplasmoides pirum (Mycoplasma pirum) protein is Triosephosphate isomerase (tpiA).